A 289-amino-acid chain; its full sequence is Putative 2-aminoethylphosphonate transport system permease protein PhnU (289 aa).

A run of 6 helical transmembrane segments spans residues 19 to 39 (WLLLPLLVLATLFFWPLSLIV), 76 to 96 (FFATAGCLLLGSVMSLILVFI), 111 to 131 (FIALPTFLITLAFTFIYGSAG), 150 to 170 (FLYSMQGVILAEITVFTPLVM), 202 to 222 (VIFPAALPALMAGGSLCLLLT), and 254 to 274 (YTVACMIALINIVLSLGLFSL). An ABC transmembrane type-1 domain is found at 68–275 (LLNTLQIAFF…VLSLGLFSLY (208 aa)).

Belongs to the binding-protein-dependent transport system permease family.

The protein resides in the cell inner membrane. Functionally, probably part of the PhnSTUV complex (TC 3.A.1.11.5) involved in 2-aminoethylphosphonate import. Probably responsible for the translocation of the substrate across the membrane. The protein is Putative 2-aminoethylphosphonate transport system permease protein PhnU (phnU) of Salmonella paratyphi A (strain ATCC 9150 / SARB42).